The primary structure comprises 852 residues: Bifunctional uridylyltransferase/uridylyl-removing enzyme (852 aa).

Residues 1 to 318 (MPANLSSALE…STPLRVTLRI (318 aa)) form a uridylyltransferase region. Residues 319–672 (DDDYIQVNNQ…SRILPKSDSF (354 aa)) are uridylyl-removing. In terms of domain architecture, HD spans 436–558 (VDDHILTVVR…VQTHERLSAL (123 aa)). ACT domains are found at residues 673 to 757 (QVMV…SRSR) and 785 to 852 (SVEI…EQLS).

It belongs to the GlnD family. Requires Mg(2+) as cofactor.

The catalysed reaction is [protein-PII]-L-tyrosine + UTP = [protein-PII]-uridylyl-L-tyrosine + diphosphate. It carries out the reaction [protein-PII]-uridylyl-L-tyrosine + H2O = [protein-PII]-L-tyrosine + UMP + H(+). Its activity is regulated as follows. Uridylyltransferase (UTase) activity is inhibited by glutamine, while glutamine activates uridylyl-removing (UR) activity. In terms of biological role, modifies, by uridylylation and deuridylylation, the PII regulatory proteins (GlnB and homologs), in response to the nitrogen status of the cell that GlnD senses through the glutamine level. Under low glutamine levels, catalyzes the conversion of the PII proteins and UTP to PII-UMP and PPi, while under higher glutamine levels, GlnD hydrolyzes PII-UMP to PII and UMP (deuridylylation). Thus, controls uridylylation state and activity of the PII proteins, and plays an important role in the regulation of nitrogen assimilation and metabolism. In Neisseria meningitidis serogroup B (strain ATCC BAA-335 / MC58), this protein is Bifunctional uridylyltransferase/uridylyl-removing enzyme.